The sequence spans 155 residues: Cyanate hydratase (155 aa).

Active-site residues include arginine 95, glutamate 98, and serine 121.

Belongs to the cyanase family.

It carries out the reaction cyanate + hydrogencarbonate + 3 H(+) = NH4(+) + 2 CO2. Its function is as follows. Catalyzes the reaction of cyanate with bicarbonate to produce ammonia and carbon dioxide. The sequence is that of Cyanate hydratase from Pseudomonas syringae pv. tomato (strain ATCC BAA-871 / DC3000).